The sequence spans 309 residues: tRNA dimethylallyltransferase (309 aa).

Residue 13–20 (GPTGAGKT) coordinates ATP. Residue 15–20 (TGAGKT) coordinates substrate. 2 interaction with substrate tRNA regions span residues 38–41 (DSRQ) and 162–166 (QRVTR).

This sequence belongs to the IPP transferase family. Monomer. Requires Mg(2+) as cofactor.

The enzyme catalyses adenosine(37) in tRNA + dimethylallyl diphosphate = N(6)-dimethylallyladenosine(37) in tRNA + diphosphate. Functionally, catalyzes the transfer of a dimethylallyl group onto the adenine at position 37 in tRNAs that read codons beginning with uridine, leading to the formation of N6-(dimethylallyl)adenosine (i(6)A). The sequence is that of tRNA dimethylallyltransferase from Nitratidesulfovibrio vulgaris (strain ATCC 29579 / DSM 644 / CCUG 34227 / NCIMB 8303 / VKM B-1760 / Hildenborough) (Desulfovibrio vulgaris).